The primary structure comprises 196 residues: Putative 3-methyladenine DNA glycosylase (196 aa).

Belongs to the DNA glycosylase MPG family.

The chain is Putative 3-methyladenine DNA glycosylase from Chlorobium phaeovibrioides (strain DSM 265 / 1930) (Prosthecochloris vibrioformis (strain DSM 265)).